The sequence spans 306 residues: D-alanine--D-alanine ligase (306 aa).

Residues lysine 105–glutamate 300 form the ATP-grasp domain. Threonine 131–threonine 186 is a binding site for ATP. The Mg(2+) site is built by aspartate 254, glutamate 267, and asparagine 269.

The protein belongs to the D-alanine--D-alanine ligase family. Mg(2+) is required as a cofactor. It depends on Mn(2+) as a cofactor.

The protein localises to the cytoplasm. The enzyme catalyses 2 D-alanine + ATP = D-alanyl-D-alanine + ADP + phosphate + H(+). Its pathway is cell wall biogenesis; peptidoglycan biosynthesis. In terms of biological role, cell wall formation. This Nitrosomonas eutropha (strain DSM 101675 / C91 / Nm57) protein is D-alanine--D-alanine ligase.